A 78-amino-acid chain; its full sequence is Chassatide C4 (78 aa).

Residues 1 to 23 form the signal peptide; it reads MAKFATQLFLLTASVVMLEVQSS. The propeptide at 24 to 42 is removed in mature form; sequence IVIMQDPDLGRKLIMNPAN. The segment at residues 43-71 is a cross-link (cyclopeptide (Gly-Asn)); that stretch reads GASCGETCFTGICFTAGCSCNPWPTCTRN. Intrachain disulfides connect Cys-46–Cys-60, Cys-50–Cys-62, and Cys-55–Cys-68. A propeptide spans 72–78 (removed in mature form); the sequence is GLNPESI.

Post-translationally, this is a cyclic peptide.

Its function is as follows. Probably participates in a plant defense mechanism. The polypeptide is Chassatide C4 (Chassalia chartacea (Chassalia curviflora)).